The chain runs to 485 residues: Cobyric acid synthase (485 aa).

Residues 249 to 437 (HLKIRVPVWQ…WHGLFSQPSA (189 aa)) form the GATase cobBQ-type domain. C330 (nucleophile) is an active-site residue. The active site involves H429.

Belongs to the CobB/CobQ family. CobQ subfamily.

Its pathway is cofactor biosynthesis; adenosylcobalamin biosynthesis. Functionally, catalyzes amidations at positions B, D, E, and G on adenosylcobyrinic A,C-diamide. NH(2) groups are provided by glutamine, and one molecule of ATP is hydrogenolyzed for each amidation. The protein is Cobyric acid synthase of Saccharophagus degradans (strain 2-40 / ATCC 43961 / DSM 17024).